The sequence spans 224 residues: PKHD-type hydroxylase Shewana3_0717 (224 aa).

In terms of domain architecture, Fe2OG dioxygenase spans 78–176; that stretch reads QFYPPLFNRY…RTAAFMWLQS (99 aa). His-96, Asp-98, and His-157 together coordinate Fe cation. Arg-167 contacts 2-oxoglutarate.

Fe(2+) is required as a cofactor. It depends on L-ascorbate as a cofactor.

In Shewanella sp. (strain ANA-3), this protein is PKHD-type hydroxylase Shewana3_0717.